The following is a 118-amino-acid chain: Small ribosomal subunit protein uS13 (118 aa).

It belongs to the universal ribosomal protein uS13 family. Part of the 30S ribosomal subunit. Forms a loose heterodimer with protein S19. Forms two bridges to the 50S subunit in the 70S ribosome.

Located at the top of the head of the 30S subunit, it contacts several helices of the 16S rRNA. In the 70S ribosome it contacts the 23S rRNA (bridge B1a) and protein L5 of the 50S subunit (bridge B1b), connecting the 2 subunits; these bridges are implicated in subunit movement. Contacts the tRNAs in the A and P-sites. This chain is Small ribosomal subunit protein uS13, found in Carsonella ruddii (strain PV).